A 208-amino-acid chain; its full sequence is LexA repressor (208 aa).

Positions 30-50 form a DNA-binding region, H-T-H motif; the sequence is VREICAAVKLSSTSTVHGHLA. Residues Ser-129 and Lys-167 each act as for autocatalytic cleavage activity in the active site.

The protein belongs to the peptidase S24 family. Homodimer.

It carries out the reaction Hydrolysis of Ala-|-Gly bond in repressor LexA.. In terms of biological role, represses a number of genes involved in the response to DNA damage (SOS response), including recA and lexA. In the presence of single-stranded DNA, RecA interacts with LexA causing an autocatalytic cleavage which disrupts the DNA-binding part of LexA, leading to derepression of the SOS regulon and eventually DNA repair. This is LexA repressor from Lactobacillus helveticus (strain DPC 4571).